A 545-amino-acid polypeptide reads, in one-letter code: Chaperonin GroEL 2 (545 aa).

Residues 29–32 (TLGP), 86–90 (DGTTT), Gly-413, 477–479 (DAA), and Asp-493 each bind ATP. The disordered stretch occupies residues 526–545 (PEPAAAGHGHGHGHQHGPGF). The segment covering 534-545 (GHGHGHQHGPGF) has biased composition (basic residues).

Belongs to the chaperonin (HSP60) family. In terms of assembly, forms a cylinder of 14 subunits composed of two heptameric rings stacked back-to-back. Interacts with the co-chaperonin GroES.

The protein localises to the cytoplasm. The enzyme catalyses ATP + H2O + a folded polypeptide = ADP + phosphate + an unfolded polypeptide.. In terms of biological role, together with its co-chaperonin GroES, plays an essential role in assisting protein folding. The GroEL-GroES system forms a nano-cage that allows encapsulation of the non-native substrate proteins and provides a physical environment optimized to promote and accelerate protein folding. This Salinispora arenicola (strain CNS-205) protein is Chaperonin GroEL 2.